Here is a 234-residue protein sequence, read N- to C-terminus: Phosphoribosylformylglycinamidine synthase subunit PurQ (234 aa).

One can recognise a Glutamine amidotransferase type-1 domain in the interval 3–231; it reads AAVVVFPGSN…ALYLERRKDH (229 aa). Cys87 acts as the Nucleophile in catalysis. Residues His200 and Glu202 contribute to the active site.

In terms of assembly, part of the FGAM synthase complex composed of 1 PurL, 1 PurQ and 2 PurS subunits.

The protein localises to the cytoplasm. It carries out the reaction N(2)-formyl-N(1)-(5-phospho-beta-D-ribosyl)glycinamide + L-glutamine + ATP + H2O = 2-formamido-N(1)-(5-O-phospho-beta-D-ribosyl)acetamidine + L-glutamate + ADP + phosphate + H(+). The catalysed reaction is L-glutamine + H2O = L-glutamate + NH4(+). Its pathway is purine metabolism; IMP biosynthesis via de novo pathway; 5-amino-1-(5-phospho-D-ribosyl)imidazole from N(2)-formyl-N(1)-(5-phospho-D-ribosyl)glycinamide: step 1/2. Functionally, part of the phosphoribosylformylglycinamidine synthase complex involved in the purines biosynthetic pathway. Catalyzes the ATP-dependent conversion of formylglycinamide ribonucleotide (FGAR) and glutamine to yield formylglycinamidine ribonucleotide (FGAM) and glutamate. The FGAM synthase complex is composed of three subunits. PurQ produces an ammonia molecule by converting glutamine to glutamate. PurL transfers the ammonia molecule to FGAR to form FGAM in an ATP-dependent manner. PurS interacts with PurQ and PurL and is thought to assist in the transfer of the ammonia molecule from PurQ to PurL. The protein is Phosphoribosylformylglycinamidine synthase subunit PurQ of Pseudothermotoga lettingae (strain ATCC BAA-301 / DSM 14385 / NBRC 107922 / TMO) (Thermotoga lettingae).